Here is a 505-residue protein sequence, read N- to C-terminus: Activin receptor type-1B (505 aa).

Residues Met1–Gly23 form the signal peptide. At Ser24–Glu126 the chain is on the extracellular side. N-linked (GlcNAc...) asparagine glycosylation is present at Asn43. A helical transmembrane segment spans residues Leu127–Ile149. Topologically, residues Asn150–Ile505 are cytoplasmic. The 30-residue stretch at Lys177 to Thr206 folds into the GS domain. The Protein kinase domain maps to Ile207–Leu497. Residues Ile213–Val221 and Lys234 contribute to the ATP site. Asp335 functions as the Proton acceptor in the catalytic mechanism. At Tyr380 the chain carries Phosphotyrosine.

This sequence belongs to the protein kinase superfamily. TKL Ser/Thr protein kinase family. TGFB receptor subfamily. As to quaternary structure, forms an activin receptor complex with activin receptor type-2 (ACVR2A or ACVR2B). Part of a complex consisting of MAGI2/ARIP1, ACVR2A, ACVR1B and SMAD3. Interacts with SMAD2 and SMAD3. Interacts with SMAD7. Interacts with FKBP1A. Interacts with IGSF1. Interacts with CRIPTO. Interacts with TDP2. Interacts with TSC22D1/TSC-22. Mg(2+) is required as a cofactor. Requires Mn(2+) as cofactor. Post-translationally, autophosphorylated. Phosphorylated by activin receptor type-2 (ACVR2A or ACVR2B) in response to activin-binding at serine and threonine residues in the GS domain. Phosphorylation of ACVR1B by activin receptor type-2 regulates association with SMAD7. In terms of processing, ubiquitinated. Level of ubiquitination is regulated by the SMAD7-SMURF1 complex. Ubiquitinated. As to expression, urogenital ridge, testis, ovary, brain and lungs.

The protein resides in the cell membrane. The enzyme catalyses L-threonyl-[receptor-protein] + ATP = O-phospho-L-threonyl-[receptor-protein] + ADP + H(+). It catalyses the reaction L-seryl-[receptor-protein] + ATP = O-phospho-L-seryl-[receptor-protein] + ADP + H(+). Its activity is regulated as follows. Activin receptor type-2 (ACVR2A or ACVR2B) activates the type-1 receptor through phosphorylation of its regulatory GS domain. Functionally, transmembrane serine/threonine kinase activin type-1 receptor forming an activin receptor complex with activin receptor type-2 (ACVR2A or ACVR2B). Transduces the activin signal from the cell surface to the cytoplasm and is thus regulating a many physiological and pathological processes including neuronal differentiation and neuronal survival, hair follicle development and cycling, FSH production by the pituitary gland, wound healing, extracellular matrix production, immunosuppression and carcinogenesis. Activin is also thought to have a paracrine or autocrine role in follicular development in the ovary. Within the receptor complex, type-2 receptors (ACVR2A and/or ACVR2B) act as a primary activin receptors whereas the type-1 receptors like ACVR1B act as downstream transducers of activin signals. Activin binds to type-2 receptor at the plasma membrane and activates its serine-threonine kinase. The activated receptor type-2 then phosphorylates and activates the type-1 receptor such as ACVR1B. Once activated, the type-1 receptor binds and phosphorylates the SMAD proteins SMAD2 and SMAD3, on serine residues of the C-terminal tail. Soon after their association with the activin receptor and subsequent phosphorylation, SMAD2 and SMAD3 are released into the cytoplasm where they interact with the common partner SMAD4. This SMAD complex translocates into the nucleus where it mediates activin-induced transcription. Inhibitory SMAD7, which is recruited to ACVR1B through FKBP1A, can prevent the association of SMAD2 and SMAD3 with the activin receptor complex, thereby blocking the activin signal. Activin signal transduction is also antagonized by the binding to the receptor of inhibin-B via the IGSF1 inhibin coreceptor. ACVR1B also phosphorylates TDP2. The protein is Activin receptor type-1B (Acvr1b) of Rattus norvegicus (Rat).